We begin with the raw amino-acid sequence, 274 residues long: Large ribosomal subunit protein uL2cz/uL2cy (274 aa).

Disordered stretches follow at residues 1–21 and 225–274; these read MAIH…VDSQ and PVDH…RRSK.

It belongs to the universal ribosomal protein uL2 family. As to quaternary structure, part of the 50S ribosomal subunit.

Its subcellular location is the plastid. The protein localises to the chloroplast. This is Large ribosomal subunit protein uL2cz/uL2cy (rpl2-A) from Arabidopsis thaliana (Mouse-ear cress).